A 180-amino-acid polypeptide reads, in one-letter code: Inner membrane-spanning protein YciB (180 aa).

5 helical membrane-spanning segments follow: residues 22-42 (IFVASGALIVATLVALAFTWL), 50-70 (MTLVTAAMVLVFGTLTLAFHS), 72-92 (LFIKWKVTVLYVLFALALLVS), 121-141 (LSWAIFFLVCGLLNIYVAFWL), and 149-169 (FKVFGLTALTLIFTLISGVYI).

Belongs to the YciB family.

Its subcellular location is the cell inner membrane. Functionally, plays a role in cell envelope biogenesis, maintenance of cell envelope integrity and membrane homeostasis. The chain is Inner membrane-spanning protein YciB from Yersinia pseudotuberculosis serotype O:1b (strain IP 31758).